Reading from the N-terminus, the 350-residue chain is Autophagy-related protein 3 (350 aa).

The flexible region stretch occupies residues 85-166 (NFAGDAGLEE…EEDDEAIIRD (82 aa)). Residues 97–171 (VDDGDEFKGS…AIIRDTDASG (75 aa)) are disordered. Basic and acidic residues predominate over residues 102-113 (EFKGSKGDDDGW). Residues 146 to 161 (DDDDDIPDMEDEEDDE) show a composition bias toward acidic residues. Catalysis depends on cysteine 244, which acts as the Glycyl thioester intermediate. The tract at residues 248-326 (PVMKTLLDRA…DQEVAIRVDQ (79 aa)) is handle region. N6-acetyllysine is present on residues lysine 262 and lysine 267.

The protein belongs to the ATG3 family. In terms of assembly, monomer. Interacts with ATG8 through an intermediate thioester bond through the C-terminal Gly of ATG8. Also interacts with the 40 amino acid C-terminal region of the E1-like ATG7 enzyme. Also interacts with the ATG12-ATG5 conjugate. Interacts with HAT1. In terms of processing, acetylated by HAT1 at Lys-262 and Lys-267, which affects the interaction with ATG8 and prevents autophagy during both appressorium development and nutrient starvation.

The protein resides in the preautophagosomal structure. It is found in the cytoplasm. Its function is as follows. E2 conjugating enzyme required for the cytoplasm to vacuole transport (Cvt) and autophagy. Required for selective autophagic degradation of the nucleus (nucleophagy) as well as for mitophagy which contributes to regulate mitochondrial quantity and quality by eliminating the mitochondria to a basal level to fulfill cellular energy requirements and preventing excess ROS production. Responsible for the E2-like covalent binding of phosphatidylethanolamine to the C-terminal Gly of ATG8. The ATG12-ATG5 conjugate plays a role of an E3 and promotes the transfer of ATG8 from ATG3 to phosphatidylethanolamine (PE). This step is required for the membrane association of ATG8. The formation of the ATG8-phosphatidylethanolamine conjugate is essential for autophagy and for the cytoplasm to vacuole transport (Cvt). The ATG8-PE conjugate mediates tethering between adjacent membranes and stimulates membrane hemifusion, leading to expansion of the autophagosomal membrane during autophagy. Plays a role in appressorium formation and pathogenicity. In Pyricularia oryzae (strain 70-15 / ATCC MYA-4617 / FGSC 8958) (Rice blast fungus), this protein is Autophagy-related protein 3.